We begin with the raw amino-acid sequence, 1125 residues long: Probable phospholipid-transporting ATPase IIB (1125 aa).

The Cytoplasmic segment spans residues 1-131 (MADGIPLNPV…IKNQKYNIVT (131 aa)). A helical membrane pass occupies residues 132 to 152 (FVPGVLYQQFKFFLNLYFLVV). At 153 to 161 (ACSQFVPSL) the chain is on the extracellular side. A helical transmembrane segment spans residues 162 to 182 (KIGYLYTYWAPLGFVLAVTMV). At 183–369 (REAVDEVRRC…LDLELNRLTK (187 aa)) the chain is on the cytoplasmic side. Residues 370-390 (ALFLAQVVLSVVMVALQGFLG) form a helical membrane-spanning segment. Residues 391–395 (PWFRN) are Extracellular-facing. The chain crosses the membrane as a helical span at residues 396 to 415 (LFRFVVLFSYIIPISLRVNL). The Cytoplasmic portion of the chain corresponds to 416–928 (DMGKSAYGWM…ALGQFVMHRG (513 aa)). Aspartate 455 acts as the 4-aspartylphosphate intermediate in catalysis. Positions 455, 456, and 457 each coordinate ATP. Aspartate 455 lines the Mg(2+) pocket. Threonine 457 lines the Mg(2+) pocket. Residues 500–511 (QSNGSSASSTPS) show a composition bias toward low complexity. 2 disordered regions span residues 500–525 (QSNG…RKSV) and 552–574 (GANA…RTYQ). Acidic residues predominate over residues 558–567 (ESTEADQDFS). Positions 580, 622, 627, 646, 675, 676, 755, 756, 757, 837, and 843 each coordinate ATP. Position 863 (aspartate 863) interacts with Mg(2+). Residues asparagine 866 and aspartate 867 each coordinate ATP. Residue aspartate 867 participates in Mg(2+) binding. The chain crosses the membrane as a helical span at residues 929–949 (MIISTMQAVFSSIFYFASVPL). The Extracellular portion of the chain corresponds to 950-951 (YQ). The chain crosses the membrane as a helical span at residues 952–972 (GFLMVGYATIYTMFPVFSLVL). Residues 973-1001 (DQDVKPEMALLYPELYKDLTKGRSLSFKT) lie on the Cytoplasmic side of the membrane. A helical membrane pass occupies residues 1002–1022 (FLIWVLISIYQGGILMYGALV). The Extracellular segment spans residues 1023 to 1030 (LFDQEFVH). Residues 1031–1051 (VVAISFTALILTELLMVALTI) form a helical membrane-spanning segment. The Cytoplasmic portion of the chain corresponds to 1052–1055 (RTWH). Residues 1056-1076 (WLMVVAQLISLACYLASLAFL) traverse the membrane as a helical segment. Residues 1077–1088 (NEYFDLSFITTR) lie on the Extracellular side of the membrane. A helical transmembrane segment spans residues 1089–1109 (VFLWKVCVITLVSCLPLYIIK). At 1110-1125 (YLKRKFSPPSYSKLSS) the chain is on the cytoplasmic side.

It belongs to the cation transport ATPase (P-type) (TC 3.A.3) family. Type IV subfamily. Mg(2+) serves as cofactor.

It localises to the golgi apparatus. The protein resides in the trans-Golgi network membrane. It carries out the reaction ATP + H2O + phospholipidSide 1 = ADP + phosphate + phospholipidSide 2.. The sequence is that of Probable phospholipid-transporting ATPase IIB (atp9b) from Danio rerio (Zebrafish).